The following is a 441-amino-acid chain: Probable magnesium transporter NIPA8 (441 aa).

The Extracellular portion of the chain corresponds to 1–4 (MGEW). Residues 5 to 25 (VIGAFINIFGSVAINFGTNLL) traverse the membrane as a helical segment. Residues 26–56 (KLGHNERERLALQDGGGKMPLKPIIHNQTWR) lie on the Cytoplasmic side of the membrane. A helical membrane pass occupies residues 57–77 (VGILVFLLGNCLNFISFGYAA). At 78-79 (QS) the chain is on the extracellular side. A helical membrane pass occupies residues 80-100 (LLAALGSIQFVSNIAFAYVVL). The Cytoplasmic portion of the chain corresponds to 101-105 (NKMVT). The chain crosses the membrane as a helical span at residues 106-126 (VKVLVATAFIVLGNVFLVAFG). The Extracellular portion of the chain corresponds to 127-144 (NHQSPVFTPEQLAEKYSN). Residues 145–165 (VTFLVYCGILILIVAVHHFLY) form a helical membrane-spanning segment. Over 166–184 (RKGEVLISTPGQEISSYWK) the chain is Cytoplasmic. The helical transmembrane segment at 185 to 205 (MLLPFSYAVVSGAIGSCSVLF) threads the bilayer. The Extracellular segment spans residues 206–222 (AKSLSNLLRLAMSSSYQ). A helical membrane pass occupies residues 223–243 (LHSWFTYSMLLLFLSTAGFWM). Over 244-255 (TRLNEGLSLYDA) the chain is Cytoplasmic. Residues 256–276 (ILIVPMFQIAWTFFSICTGCI) traverse the membrane as a helical segment. At 277-288 (YFQEFQVFDALR) the chain is on the extracellular side. A helical membrane pass occupies residues 289 to 309 (TTMFILGMMCVFIGISLLAPD). Topologically, residues 310-441 (DTRGNETKDN…MLEKTISSKA (132 aa)) are cytoplasmic. Residues 313–347 (GNETKDNSSSLDSIVSSSVPTEEDRLIPQSSEDGH) are disordered. The segment covering 320 to 330 (SSSLDSIVSSS) has biased composition (low complexity). Residues 334–347 (EEDRLIPQSSEDGH) show a composition bias toward basic and acidic residues.

Belongs to the NIPA (TC 2.A.7) family. In terms of assembly, homodimer.

It is found in the cell membrane. It localises to the early endosome. Acts as a Mg(2+) transporter. Can also transport other divalent cations such as Fe(2+), Sr(2+), Ba(2+), Mn(2+) and Co(2+) but to a much less extent than Mg(2+). The sequence is that of Probable magnesium transporter NIPA8 from Arabidopsis thaliana (Mouse-ear cress).